The following is a 550-amino-acid chain: Lariat debranching enzyme (550 aa).

A divalent metal cation is bound by residues Cys-8 and His-10. Ser-28 bears the Phosphoserine mark. 2 residues coordinate a divalent metal cation: Asp-39 and Asn-84. Residues 124–154 (SGIFKSHDYRKGHFECPPYNSSTIRSIYHVR) form a lariat recognition loop region. Lys-128 carries the N6-acetyllysine modification. Residues His-174, His-226, and His-228 each coordinate a divalent metal cation. The disordered stretch occupies residues 390-550 (EHHQCGEYEQ…AVDDGDASAE (161 aa)). Residues 416–426 (NTDTSALSSIN) are compositionally biased toward polar residues. The segment covering 430 to 445 (IMLDEEEEEEEEEEEA) has biased composition (acidic residues). The span at 450–483 (SDMNTPSVEPASDQASDLSTSFSDIRNLPSSMFV) shows a compositional bias: polar residues. Phosphoserine is present on residues Ser-470, Ser-480, Ser-484, Ser-485, Ser-489, Ser-491, Ser-494, Ser-505, and Ser-520. A compositionally biased stretch (basic and acidic residues) spans 498 to 528 (KCGETVESGDEKDLAKFPLKRLSDEHEPEQR).

It belongs to the lariat debranching enzyme family. The cofactor is Fe(2+). Zn(2+) serves as cofactor. It depends on Mn(2+) as a cofactor.

It is found in the nucleus. With respect to regulation, active in presence of diverse metals including Fe(2+), Zn(2+), Mn(2+). Also activated by Ca(2+). Binds two metal cations in two adjacent alpha and beta metal-binding pockets. Functionally, cleaves the 2'-5' phosphodiester linkage at the branch point of excised lariat intron RNA and converts them into linear molecules that can be subsequently degraded, thereby facilitating ribonucleotide turnover. Linked to its role in pre-mRNA processing mechanism, may also participate in retrovirus replication and have an antiviral cell-intrinsic defense function. This is Lariat debranching enzyme (Dbr1) from Mus musculus (Mouse).